The primary structure comprises 570 residues: Dihydroxy-acid dehydratase 2 (570 aa).

A [2Fe-2S] cluster-binding site is contributed by C51. Position 83 (D83) interacts with Mg(2+). C124 is a binding site for [2Fe-2S] cluster. The Mg(2+) site is built by D125 and K126. K126 is modified (N6-carboxylysine). Residue C196 participates in [2Fe-2S] cluster binding. A Mg(2+)-binding site is contributed by E446. The active-site Proton acceptor is the S472.

Belongs to the IlvD/Edd family. Homodimer. Requires [2Fe-2S] cluster as cofactor. Mg(2+) serves as cofactor.

The catalysed reaction is (2R)-2,3-dihydroxy-3-methylbutanoate = 3-methyl-2-oxobutanoate + H2O. It catalyses the reaction (2R,3R)-2,3-dihydroxy-3-methylpentanoate = (S)-3-methyl-2-oxopentanoate + H2O. The protein operates within amino-acid biosynthesis; L-isoleucine biosynthesis; L-isoleucine from 2-oxobutanoate: step 3/4. It participates in amino-acid biosynthesis; L-valine biosynthesis; L-valine from pyruvate: step 3/4. Its function is as follows. Functions in the biosynthesis of branched-chain amino acids. Catalyzes the dehydration of (2R,3R)-2,3-dihydroxy-3-methylpentanoate (2,3-dihydroxy-3-methylvalerate) into 2-oxo-3-methylpentanoate (2-oxo-3-methylvalerate) and of (2R)-2,3-dihydroxy-3-methylbutanoate (2,3-dihydroxyisovalerate) into 2-oxo-3-methylbutanoate (2-oxoisovalerate), the penultimate precursor to L-isoleucine and L-valine, respectively. In Bordetella bronchiseptica (strain ATCC BAA-588 / NCTC 13252 / RB50) (Alcaligenes bronchisepticus), this protein is Dihydroxy-acid dehydratase 2.